The chain runs to 173 residues: DELTA-actitoxin-Oor1b (173 aa).

Positions 6 to 25 (GAALGFNVHQTVLKALGQVS) are N-terminal region. Residues S49, V82, S100, P102, Y128, and Y133 each coordinate phosphocholine. The tract at residues 100–115 (SVPFDYNLYSNWWDVK) is trp-rich region, which is important for the binding to lipid membrane.

The protein belongs to the actinoporin family. Sea anemone subfamily. In terms of assembly, octamer or nonamer in membranes. Monomer in the soluble state.

The protein localises to the secreted. The protein resides in the nematocyst. Its subcellular location is the target cell membrane. Its function is as follows. Pore-forming protein that forms cations-selective hydrophilic pores of around 1 nm and causes cardiac stimulation and cytolysis. Pore formation is a multi-step process that involves specific recognition of membrane sphingomyelin (but neither cholesterol nor phosphatidylcholine) using aromatic rich region and adjacent phosphocholine (POC) binding site, firm binding to the membrane (mainly driven by hydrophobic interactions) accompanied by the transfer of the N-terminal region to the lipid-water interface and finally pore formation after oligomerization of monomers. Cytolytic effects include red blood cells hemolysis, platelet aggregation and lysis, cytotoxic and cytostatic effects on fibroblasts. Lethality in mammals has been ascribed to severe vasospasm of coronary vessels, cardiac arrhythmia, and inotropic effects. In Oulactis orientalis (Japan anemone), this protein is DELTA-actitoxin-Oor1b.